We begin with the raw amino-acid sequence, 148 residues long: Snaclec 3 (148 aa).

The first 23 residues, 1–23, serve as a signal peptide directing secretion; that stretch reads WGDSSSSASACWSCSSPLSGTEA. 3 disulfides stabilise this stretch: cysteine 27–cysteine 38, cysteine 55–cysteine 144, and cysteine 121–cysteine 136. Residues 34–145 enclose the C-type lectin domain; the sequence is YDQNCYKAFE…CSGTHSFVCK (112 aa).

It belongs to the snaclec family. Heterodimer; disulfide-linked. Expressed by the venom gland.

Its subcellular location is the secreted. Functionally, interferes with one step of hemostasis (modulation of platelet aggregation, or coagulation cascade, for example). The polypeptide is Snaclec 3 (Echis carinatus sochureki (Saw-scaled viper)).